The primary structure comprises 444 residues: MPTARCSMRASSTAPVRMMATAGGARIGAILRVTSGNFLEQFDFFLFGFYATYIAHTFFPASSEFASLMMTFAVFGAGFLMRPIGAIVLGAYIDKVGRRKGLIVTLSIMATGTFLIVLIPSYQTIGLWAPLLVLIGRLLQGFSAGAELGGVSVYLAEIATPGRKGFYTSWQSGSQQVAIMVAAAMGFALNAVLEPSAISDWGWRIPFLFGVLIVPFIFILRRKLEETQEFTARRHHLAMRQVFATLLANWQVVIAGMMMVAMTTTAFYLITVYAPTFGKKVLMLSASDSLLVTLLVAISNFFWLPVGGALSDRFGRRSVLIAMTLLALATAWPALTMLANAPSFLMMLSVLLWLSFIYGMYNGAMIPALTEIMPAEVRVAGFSLAYSLATAVFGGFTPVISTALIEYTGDKASPGYWMSFAAICGLLATCYLYRRSAVALQTAR.

The Cytoplasmic portion of the chain corresponds to 1–41 (MPTARCSMRASSTAPVRMMATAGGARIGAILRVTSGNFLEQ). The helical transmembrane segment at 42–62 (FDFFLFGFYATYIAHTFFPAS) threads the bilayer. The Periplasmic segment spans residues 63 to 72 (SEFASLMMTF). Residues 73-93 (AVFGAGFLMRPIGAIVLGAYI) traverse the membrane as a helical segment. Residues 94–114 (DKVGRRKGLIVTLSIMATGTF) lie on the Cytoplasmic side of the membrane. Residues 115-135 (LIVLIPSYQTIGLWAPLLVLI) traverse the membrane as a helical segment. At 136–137 (GR) the chain is on the periplasmic side. A helical transmembrane segment spans residues 138 to 158 (LLQGFSAGAELGGVSVYLAEI). At 159 to 177 (ATPGRKGFYTSWQSGSQQV) the chain is on the cytoplasmic side. A helical membrane pass occupies residues 178–198 (AIMVAAAMGFALNAVLEPSAI). A topological domain (periplasmic) is located at residue S199. A helical membrane pass occupies residues 200–220 (DWGWRIPFLFGVLIVPFIFIL). Residues 221–251 (RRKLEETQEFTARRHHLAMRQVFATLLANWQ) are Cytoplasmic-facing. A helical transmembrane segment spans residues 252 to 272 (VVIAGMMMVAMTTTAFYLITV). At 273 to 289 (YAPTFGKKVLMLSASDS) the chain is on the periplasmic side. Residues 290-310 (LLVTLLVAISNFFWLPVGGAL) form a helical membrane-spanning segment. The Cytoplasmic portion of the chain corresponds to 311 to 318 (SDRFGRRS). A helical membrane pass occupies residues 319 to 339 (VLIAMTLLALATAWPALTMLA). N340 is a topological domain (periplasmic). The chain crosses the membrane as a helical span at residues 341 to 361 (APSFLMMLSVLLWLSFIYGMY). The Cytoplasmic portion of the chain corresponds to 362–379 (NGAMIPALTEIMPAEVRV). Residues 380-400 (AGFSLAYSLATAVFGGFTPVI) traverse the membrane as a helical segment. The Periplasmic segment spans residues 401-411 (STALIEYTGDK). A helical transmembrane segment spans residues 412 to 432 (ASPGYWMSFAAICGLLATCYL). The Cytoplasmic segment spans residues 433 to 444 (YRRSAVALQTAR).

Belongs to the major facilitator superfamily. Metabolite:H+ Symporter (MHS) family (TC 2.A.1.6) family.

The protein localises to the cell inner membrane. Uptake of citrate across the boundary membrane with the concomitant transport of protons into the cell (symport system). The polypeptide is Citrate-proton symporter (citH) (Klebsiella pneumoniae).